The following is a 691-amino-acid chain: Seven transmembrane domain-containing tyrosine-protein kinase 1 (691 aa).

Over 1–33 the chain is Extracellular; sequence MDTSCVSINQCGFCTYLFNRSIPLAGEGDGAIM. The chain crosses the membrane as a helical span at residues 34 to 54; the sequence is FNTMVDSMALGYIFSALYLLF. At 55-126 the chain is on the cytoplasmic side; that stretch reads RLQRSYTYLQ…PRIINSTYFK (72 aa). A helical membrane pass occupies residues 127-144; that stretch reads YTLFVSLWLAFEGLLLLF. The Extracellular portion of the chain corresponds to 145–153; that stretch reads LPPNSLAYP. The helical transmembrane segment at 154 to 176 threads the bilayer; it reads AFVIIVGTGHIVTDNWVLVFLYG. Residues 177 to 186 lie on the Cytoplasmic side of the membrane; it reads KEDDRFSARR. A helical transmembrane segment spans residues 187–207; sequence SFYSCTLLYLIICCTTLASFF. The Extracellular portion of the chain corresponds to 208 to 227; that stretch reads DDQTMCKKNDCQTFMFQDEY. The helical transmembrane segment at 228-248 threads the bilayer; that stretch reads TSLAITVASLVVYTIVLGMTI. The Cytoplasmic portion of the chain corresponds to 249 to 258; that stretch reads KRSFLRPTGR. A helical transmembrane segment spans residues 259–279; the sequence is IWLLFLMGYNCISSVGALLNI. Over 280 to 284 the chain is Extracellular; that stretch reads LDVDA. The helical transmembrane segment at 285–305 threads the bilayer; the sequence is GYCFLGIAAIIYSFSYGPLLF. Over 306 to 691 the chain is Cytoplasmic; sequence RTCGNDTNLL…GAEEFHYIDG (386 aa). Residues 363-634 form the Protein kinase domain; that stretch reads FKFGQVIGEG…ANVPISNTYV (272 aa). ATP-binding positions include 369-377 and Lys-390; that span reads IGEGYFGEV. Asp-493 serves as the catalytic Proton acceptor.

It belongs to the protein kinase superfamily. TKL Tyr protein kinase family.

It localises to the membrane. It catalyses the reaction L-tyrosyl-[protein] + ATP = O-phospho-L-tyrosyl-[protein] + ADP + H(+). The polypeptide is Seven transmembrane domain-containing tyrosine-protein kinase 1 (7tmk1) (Dictyostelium discoideum (Social amoeba)).